Consider the following 36-residue polypeptide: Potassium channel toxin alpha-KTx 2.7 (36 aa).

Disulfide bonds link C7/C29, C13/C34, and C17/C36.

Belongs to the short scorpion toxin superfamily. Potassium channel inhibitor family. Alpha-KTx 02 subfamily. In terms of tissue distribution, expressed by the venom gland.

The protein localises to the secreted. Inhibitor of voltage-gated potassium channels (Kv). This protein is capable of displacing the binding of radio-labeled noxiustoxin (AC P08815) to rat brain synaptosomes with high affinity (about 100 pM). It is also capable of inhibiting transient potassium-currents (resembling I(A)-type currents), in cultured rat cerebellar granule cells. About 50% of the peak currents are reduced by application of a 1.5 uM solution of this toxin. Is lethal to mice (when less than 100 ug are injected). The protein is Potassium channel toxin alpha-KTx 2.7 of Centruroides limpidus (Mexican scorpion).